A 967-amino-acid polypeptide reads, in one-letter code: Translation initiation factor IF-2 (967 aa).

Disordered regions lie at residues 201 to 320 (KPIV…PGFV) and 349 to 382 (LQGK…ELEA). Residues 233–248 (TGPTFSGQTIDLSQFN) are compositionally biased toward polar residues. Over residues 256–272 (PNKGGAKPAGAGNNNNN) the composition is skewed to low complexity. Residues 354-363 (NKSKAAKYRR) show a composition bias toward basic residues. The span at 364–382 (DKRDTHRQKSDDEQRELEA) shows a compositional bias: basic and acidic residues. The 171-residue stretch at 465 to 635 (HRAPIVTVMG…LLEAEVLDLK (171 aa)) folds into the tr-type G domain. Positions 474–481 (GHVDHGKT) are G1. 474 to 481 (GHVDHGKT) provides a ligand contact to GTP. Residues 499–503 (GITQH) are G2. Positions 521-524 (DTPG) are G3. GTP-binding positions include 521-525 (DTPGH) and 575-578 (NKVD). The segment at 575-578 (NKVD) is G4. The G5 stretch occupies residues 611–613 (SAK).

This sequence belongs to the TRAFAC class translation factor GTPase superfamily. Classic translation factor GTPase family. IF-2 subfamily.

Its subcellular location is the cytoplasm. Functionally, one of the essential components for the initiation of protein synthesis. Protects formylmethionyl-tRNA from spontaneous hydrolysis and promotes its binding to the 30S ribosomal subunits. Also involved in the hydrolysis of GTP during the formation of the 70S ribosomal complex. The protein is Translation initiation factor IF-2 of Flavobacterium psychrophilum (strain ATCC 49511 / DSM 21280 / CIP 103535 / JIP02/86).